The following is a 92-amino-acid chain: Probable Fe(2+)-trafficking protein (92 aa).

The protein belongs to the Fe(2+)-trafficking protein family.

Functionally, could be a mediator in iron transactions between iron acquisition and iron-requiring processes, such as synthesis and/or repair of Fe-S clusters in biosynthetic enzymes. The protein is Probable Fe(2+)-trafficking protein of Shewanella sp. (strain ANA-3).